Reading from the N-terminus, the 44-residue chain is Photosystem I reaction center subunit IX (44 aa).

A helical transmembrane segment spans residues 7–27 (YLSVAPVLSTLWFGALAGLLI).

It belongs to the PsaJ family.

It localises to the plastid. The protein resides in the chloroplast thylakoid membrane. In terms of biological role, may help in the organization of the PsaE and PsaF subunits. This chain is Photosystem I reaction center subunit IX, found in Oryza nivara (Indian wild rice).